The sequence spans 138 residues: Secreted RxLR effector protein 51 (138 aa).

The first 19 residues, 1 to 19, serve as a signal peptide directing secretion; it reads MRSSTILFVLGVAMVAVNG. Residues 38-53 carry the RxLR-dEER motif; the sequence is RLLRSNSGKHKTDEER. Asn101 carries N-linked (GlcNAc...) asparagine glycosylation.

The protein belongs to the RxLR effector family.

Its subcellular location is the secreted. It localises to the host nucleus. In terms of biological role, secreted effector that completely suppresses the host cell death induced by cell death-inducing proteins. The protein is Secreted RxLR effector protein 51 of Plasmopara viticola (Downy mildew of grapevine).